A 217-amino-acid polypeptide reads, in one-letter code: Large ribosomal subunit protein uL4 (217 aa).

The segment at 58–90 (TAATKGRSDVSGGGKKPWRQKGTGRARSGTSRS) is disordered.

This sequence belongs to the universal ribosomal protein uL4 family. As to quaternary structure, part of the 50S ribosomal subunit.

Functionally, one of the primary rRNA binding proteins, this protein initially binds near the 5'-end of the 23S rRNA. It is important during the early stages of 50S assembly. It makes multiple contacts with different domains of the 23S rRNA in the assembled 50S subunit and ribosome. Forms part of the polypeptide exit tunnel. The sequence is that of Large ribosomal subunit protein uL4 from Syntrophus aciditrophicus (strain SB).